A 214-amino-acid polypeptide reads, in one-letter code: Dual specificity phosphatase 29 (214 aa).

The Tyrosine-protein phosphatase domain occupies His46–Leu194. Substrate is bound at residue His138–Arg145. Cys139 functions as the Phosphocysteine intermediate in the catalytic mechanism.

It belongs to the protein-tyrosine phosphatase family. Non-receptor class dual specificity subfamily.

The protein localises to the cytoplasm. The protein resides in the nucleus. The enzyme catalyses O-phospho-L-tyrosyl-[protein] + H2O = L-tyrosyl-[protein] + phosphate. It carries out the reaction O-phospho-L-seryl-[protein] + H2O = L-seryl-[protein] + phosphate. The catalysed reaction is O-phospho-L-threonyl-[protein] + H2O = L-threonyl-[protein] + phosphate. Dual specificity phosphatase able to dephosphorylate phosphotyrosine, phosphoserine and phosphothreonine residues within the same substrate, with a preference for phosphotyrosine as a substrate. Involved in the modulation of AMPK and MAPK1/2 signaling pathways. In Gallus gallus (Chicken), this protein is Dual specificity phosphatase 29 (DUSP29).